The primary structure comprises 70 residues: Envelope small membrane protein (70 aa).

Residue Gly-2 is the site of N-myristoyl glycine; by host attachment. Positions 2–15 are endoplasmic reticulum retention signal; the sequence is GSLWSKISQLFVDA. Residues 2-25 lie on the Virion surface side of the membrane; sequence GSLWSKISQLFVDAFTEFLVSVVD. A helical transmembrane segment spans residues 26–46; the sequence is IAIFLAILFGFTVAGWLLVFL. Residues 47 to 70 lie on the Intravirion side of the membrane; sequence LRVVCSALLRSRSAIHSPELSKVL.

The protein belongs to the arteriviridae E protein family. As to quaternary structure, homooligomer. Associates with itself into higher-order structures, including dimers, trimers and tetramers. Associates with the GP2a-GP3-GP4 complex. Post-translationally, myristoylated. Not glycosylated.

The protein localises to the virion membrane. Its subcellular location is the host endoplasmic reticulum membrane. It is found in the host Golgi apparatus membrane. The protein resides in the secreted. In terms of biological role, minor envelope protein. May function as a viroporin in the virion envelope that facilitates uncoating of the virus in order to release the genomic RNA into the cytoplasm for subsequent replication. This Sus scrofa (Pig) protein is Envelope small membrane protein (GP2b).